The primary structure comprises 62 residues: DNA-binding protein 7 (62 aa).

This sequence belongs to the 7 kDa DNA-binding/endoribonuclease P2 family. Monomer.

It is found in the cytoplasm. Its function is as follows. Can constrain negative DNA supercoils. May be involved in maintaining the integrity of the genome at high temperature. In Metallosphaera cuprina (strain Ar-4), this protein is DNA-binding protein 7.